The primary structure comprises 505 residues: MPPSAEFARSTSTNEAAPIRFDNTYARLPEAFYQRVEPATAAAPRLLRVNDALARQLRIDPQFLESPEGVAVLSGNVIAPGSEPIAQAYAGHQFGDFVPQLGDGRAILLGEVVDVAGKRYDLQLKGSGRTRFSRGGDGRAALGPVIREYIVSEAMAALGIPTTRSLAAVLTGENVMRERVLPGGVLTRVASSHLRVGTFQYFAARGDIENLRVLADYAIERHYPEARSAEDPYRAFYDAVVAALARLAARWMLVGFIHGVLNTDNTAIGGETIDYGPCAFMDAYHPDKVFSSIDQFGRYAFANQPAVIRWNLTRFAETLLPLMADGTDKAIEAANASIARFKDQYQDAYIRGFRQKLGLALEMEGDLELAADLLARMAENQADFTLTFRALCEAAADPKGNAGVRALFANPSAFDEWAARWRERLSLEERSAEARRTAMLAASPVFIPRNHRIEAAIQDAEAGHFDKFHELVEVLAHPYDDQPQFADYGKPPAPGEEVQQTFCGT.

ATP-binding residues include G102, G104, R105, K125, D137, G138, R188, and R195. The active-site Proton acceptor is D264. The Mg(2+) site is built by N265 and D274. Residue D274 coordinates ATP. The tract at residues 485–505 is disordered; sequence FADYGKPPAPGEEVQQTFCGT.

It belongs to the SELO family. It depends on Mg(2+) as a cofactor. Requires Mn(2+) as cofactor.

The catalysed reaction is L-seryl-[protein] + ATP = 3-O-(5'-adenylyl)-L-seryl-[protein] + diphosphate. The enzyme catalyses L-threonyl-[protein] + ATP = 3-O-(5'-adenylyl)-L-threonyl-[protein] + diphosphate. It catalyses the reaction L-tyrosyl-[protein] + ATP = O-(5'-adenylyl)-L-tyrosyl-[protein] + diphosphate. It carries out the reaction L-histidyl-[protein] + UTP = N(tele)-(5'-uridylyl)-L-histidyl-[protein] + diphosphate. The catalysed reaction is L-seryl-[protein] + UTP = O-(5'-uridylyl)-L-seryl-[protein] + diphosphate. The enzyme catalyses L-tyrosyl-[protein] + UTP = O-(5'-uridylyl)-L-tyrosyl-[protein] + diphosphate. Functionally, nucleotidyltransferase involved in the post-translational modification of proteins. It can catalyze the addition of adenosine monophosphate (AMP) or uridine monophosphate (UMP) to a protein, resulting in modifications known as AMPylation and UMPylation. The chain is Protein nucleotidyltransferase YdiU from Nitrobacter hamburgensis (strain DSM 10229 / NCIMB 13809 / X14).